A 113-amino-acid polypeptide reads, in one-letter code: Replication initiation control protein YabA (113 aa).

Residues H88, C90, C104, and C107 each coordinate Zn(2+).

The protein belongs to the YabA family. In terms of assembly, homotetramer. Interacts with both DnaA and DnaN, acting as a bridge between these two proteins. It depends on Zn(2+) as a cofactor.

It localises to the cytoplasm. Its subcellular location is the nucleoid. Its function is as follows. Involved in control of chromosome replication initiation. Inhibits the cooperative binding of DnaA to the oriC region, thus negatively regulating initiation of chromosome replication. Inhibits the ability of DnaA-ATP to form a helix on DNA; does not disassemble preformed DnaA-DNA helices. Decreases the residence time of DnaA on the chromosome at its binding sites (oriC, replication forks and promoter-binding sites). Tethers DnaA to the replication machinery via the DNA polymerase beta sliding clamp subunit (dnaN). Associates with oriC and other DnaA targets on the chromosome in a DnaA-dependent manner. The chain is Replication initiation control protein YabA from Staphylococcus saprophyticus subsp. saprophyticus (strain ATCC 15305 / DSM 20229 / NCIMB 8711 / NCTC 7292 / S-41).